The chain runs to 428 residues: Histidine--tRNA ligase (428 aa).

Belongs to the class-II aminoacyl-tRNA synthetase family. Homodimer.

The protein resides in the cytoplasm. It carries out the reaction tRNA(His) + L-histidine + ATP = L-histidyl-tRNA(His) + AMP + diphosphate + H(+). The chain is Histidine--tRNA ligase from Mesomycoplasma hyopneumoniae (strain 232) (Mycoplasma hyopneumoniae).